Consider the following 573-residue polypeptide: Acetolactate synthase large subunit (573 aa).

Thiamine diphosphate is bound at residue Glu-51. FAD contacts are provided by residues Arg-153, 261 to 282, and 304 to 323; these read HGTLEANTAMHESDLILGIGVR and DIDPTSISKNVPVAIPIVGN. The thiamine pyrophosphate binding stretch occupies residues 396-476; that stretch reads QHQMFAALHY…VVIICLNNHF (81 aa). Asp-447 and Asn-474 together coordinate Mg(2+).

This sequence belongs to the TPP enzyme family. In terms of assembly, dimer of large and small chains. The cofactor is Mg(2+). Requires thiamine diphosphate as cofactor.

The catalysed reaction is 2 pyruvate + H(+) = (2S)-2-acetolactate + CO2. It functions in the pathway amino-acid biosynthesis; L-isoleucine biosynthesis; L-isoleucine from 2-oxobutanoate: step 1/4. Its pathway is amino-acid biosynthesis; L-valine biosynthesis; L-valine from pyruvate: step 1/4. The sequence is that of Acetolactate synthase large subunit (ilvI) from Haemophilus influenzae (strain ATCC 51907 / DSM 11121 / KW20 / Rd).